Consider the following 61-residue polypeptide: MSNKLKVTLIKSMNGRLQAHQQCVRGLGLRRIHQSCEVQDTPENRGMINKVAYLLKVEEVL.

Belongs to the universal ribosomal protein uL30 family. As to quaternary structure, part of the 50S ribosomal subunit.

The sequence is that of Large ribosomal subunit protein uL30 from Dichelobacter nodosus (strain VCS1703A).